Reading from the N-terminus, the 336-residue chain is C2H2 finger domain transcription factor mtfA (336 aa).

The interval 1–245 is disordered; the sequence is MDVASLISPS…PSPGHQQMIS (245 aa). Composition is skewed to polar residues over residues 7–29 and 36–56; these read ISPSESDTVPTFRSRSIQNSSAS and EQSTGSYFSAVPTHTTSYSRT. The segment covering 136-149 has biased composition (low complexity); sequence SPSTSSVSAASSSA. Residues 168-181 are compositionally biased toward polar residues; it reads TDRSSISSQGSVQH. Positions 182–210 are enriched in low complexity; sequence AASAPYASPAPSVSSFSSPIEPSTPSTAA. A compositionally biased stretch (polar residues) spans 216 to 245; it reads PAPNTFQNPSPFPQTSTASLPSPGHQQMIS. C2H2-type zinc fingers lie at residues 272–294 and 300–325; these read YICRTCHKAFSRPSSLRIHSHSH and FRCTHAGCGKAFSVRSNMKRHERGCH.

Its subcellular location is the nucleus. Transcription factor that controls morphogenesis and virulence. Acts as a positive regulator of gliotixin and protease production. This chain is C2H2 finger domain transcription factor mtfA, found in Aspergillus fumigatus (strain CBS 144.89 / FGSC A1163 / CEA10) (Neosartorya fumigata).